A 274-amino-acid chain; its full sequence is Hydroxyethylthiazole kinase (274 aa).

Substrate is bound at residue Met49. Positions 125 and 173 each coordinate ATP. Substrate is bound at residue Gly200.

The protein belongs to the Thz kinase family. Mg(2+) is required as a cofactor.

It catalyses the reaction 5-(2-hydroxyethyl)-4-methylthiazole + ATP = 4-methyl-5-(2-phosphooxyethyl)-thiazole + ADP + H(+). Its pathway is cofactor biosynthesis; thiamine diphosphate biosynthesis; 4-methyl-5-(2-phosphoethyl)-thiazole from 5-(2-hydroxyethyl)-4-methylthiazole: step 1/1. Catalyzes the phosphorylation of the hydroxyl group of 4-methyl-5-beta-hydroxyethylthiazole (THZ). The polypeptide is Hydroxyethylthiazole kinase (Desulfosudis oleivorans (strain DSM 6200 / JCM 39069 / Hxd3) (Desulfococcus oleovorans)).